The sequence spans 432 residues: Adenosylhomocysteinase (432 aa).

An N-acetylserine modification is found at Ser2. 3 residues coordinate substrate: Thr57, Asp131, and Glu156. Ser183 carries the phosphoserine modification. Positions 183–350 (SVTKSKFDNL…EGRLVNLGCA (168 aa)) are NAD binding. The substrate site is built by Lys186 and Asp190. N6-(2-hydroxyisobutyryl)lysine is present on Lys186. Tyr193 carries the post-translational modification Phosphotyrosine.

This sequence belongs to the adenosylhomocysteinase family. In terms of assembly, homotetramer. Interaction with AHCYL1. The cofactor is NAD(+).

It is found in the cytoplasm. The protein localises to the melanosome. It localises to the nucleus. The protein resides in the endoplasmic reticulum. It carries out the reaction S-adenosyl-L-homocysteine + H2O = L-homocysteine + adenosine. It functions in the pathway amino-acid biosynthesis; L-homocysteine biosynthesis; L-homocysteine from S-adenosyl-L-homocysteine: step 1/1. Its function is as follows. Catalyzes the hydrolysis of S-adenosyl-L-homocysteine to form adenosine and homocysteine. Binds copper ions. The sequence is that of Adenosylhomocysteinase (AHCY) from Sus scrofa (Pig).